Here is a 158-residue protein sequence, read N- to C-terminus: Cytochrome c-type biogenesis protein CcmE (158 aa).

Residues 1–8 (MNIRRRRR) are Cytoplasmic-facing. A helical; Signal-anchor for type II membrane protein transmembrane segment spans residues 9–29 (LLVVVAILVGLGLATGLVMYA). At 30–158 (LRSNIDLFYT…GLLNVSEPTR (129 aa)) the chain is on the periplasmic side. Heme contacts are provided by His-130 and Tyr-134.

It belongs to the CcmE/CycJ family.

It is found in the cell inner membrane. In terms of biological role, heme chaperone required for the biogenesis of c-type cytochromes. Transiently binds heme delivered by CcmC and transfers the heme to apo-cytochromes in a process facilitated by CcmF and CcmH. This Tatumella citrea (Pantoea citrea) protein is Cytochrome c-type biogenesis protein CcmE.